The sequence spans 315 residues: tRNA wybutosine-synthesizing protein 5 (315 aa).

The JmjC domain occupies 102 to 267 (DEKYYLRSLG…YDTTDTYGNK (166 aa)). 2-oxoglutarate is bound at residue Tyr-106. Fe cation is bound by residues His-160 and Asp-162. 2-oxoglutarate contacts are provided by Asn-166 and Lys-175. Residue His-235 participates in Fe cation binding.

The protein belongs to the TYW5 family. In terms of assembly, homodimer. The cofactor is Fe(2+).

The enzyme catalyses 7-[(3S)-3-amino-3-carboxypropyl]wyosine(37) in tRNA(Phe) + 2-oxoglutarate + O2 = 7-(2-hydroxy-3-amino-3-carboxypropyl)wyosine(37) in tRNA(Phe) + succinate + CO2. It functions in the pathway tRNA modification; wybutosine-tRNA(Phe) biosynthesis. Its function is as follows. tRNA hydroxylase that acts as a component of the wybutosine biosynthesis pathway. Wybutosine is a hyper modified guanosine with a tricyclic base found at the 3'-position adjacent to the anticodon of eukaryotic phenylalanine tRNA. Catalyzes the hydroxylation of 7-(a-amino-a-carboxypropyl)wyosine (yW-72) into undermodified hydroxywybutosine (OHyW*). OHyW* being further transformed into hydroxywybutosine (OHyW) by LCMT2/TYW4. OHyW is a derivative of wybutosine found in higher eukaryotes. This Mus musculus (Mouse) protein is tRNA wybutosine-synthesizing protein 5 (Tyw5).